The following is a 458-amino-acid chain: UDP-N-acetylmuramoylalanine--D-glutamate ligase (458 aa).

124–130 contacts ATP; that stretch reads GSDGKTT.

This sequence belongs to the MurCDEF family.

It is found in the cytoplasm. It carries out the reaction UDP-N-acetyl-alpha-D-muramoyl-L-alanine + D-glutamate + ATP = UDP-N-acetyl-alpha-D-muramoyl-L-alanyl-D-glutamate + ADP + phosphate + H(+). Its pathway is cell wall biogenesis; peptidoglycan biosynthesis. Functionally, cell wall formation. Catalyzes the addition of glutamate to the nucleotide precursor UDP-N-acetylmuramoyl-L-alanine (UMA). The sequence is that of UDP-N-acetylmuramoylalanine--D-glutamate ligase from Clostridium tetani (strain Massachusetts / E88).